A 525-amino-acid chain; its full sequence is GMP synthase [glutamine-hydrolyzing] (525 aa).

Residues 9–207 enclose the Glutamine amidotransferase type-1 domain; sequence RILILDFGSQ…VRDICQCEAL (199 aa). The active-site Nucleophile is the Cys-86. Residues His-181 and Glu-183 contribute to the active site. The region spanning 208–400 is the GMPS ATP-PPase domain; the sequence is WTPAKIIDDA…LGLPYDMLYR (193 aa). 235-241 contacts ATP; it reads SGGVDSS.

As to quaternary structure, homodimer.

It carries out the reaction XMP + L-glutamine + ATP + H2O = GMP + L-glutamate + AMP + diphosphate + 2 H(+). The protein operates within purine metabolism; GMP biosynthesis; GMP from XMP (L-Gln route): step 1/1. In terms of biological role, catalyzes the synthesis of GMP from XMP. This Escherichia coli O139:H28 (strain E24377A / ETEC) protein is GMP synthase [glutamine-hydrolyzing].